The sequence spans 222 residues: Nucleoside triphosphate pyrophosphatase (222 aa).

The Proton acceptor role is filled by Asp-82.

It belongs to the Maf family. Requires a divalent metal cation as cofactor.

Its subcellular location is the cytoplasm. The catalysed reaction is a ribonucleoside 5'-triphosphate + H2O = a ribonucleoside 5'-phosphate + diphosphate + H(+). The enzyme catalyses a 2'-deoxyribonucleoside 5'-triphosphate + H2O = a 2'-deoxyribonucleoside 5'-phosphate + diphosphate + H(+). In terms of biological role, nucleoside triphosphate pyrophosphatase. May have a dual role in cell division arrest and in preventing the incorporation of modified nucleotides into cellular nucleic acids. This is Nucleoside triphosphate pyrophosphatase from Mycobacterium bovis (strain ATCC BAA-935 / AF2122/97).